Consider the following 436-residue polypeptide: Cytokine receptor-like factor 3 (436 aa).

Residues 9 to 87 (LMQEAWESID…VSAIEQENIK (79 aa)) adopt a coiled-coil conformation. One can recognise a Fibronectin type-III domain in the interval 177 to 270 (PPVQIEELIE…LQTSRTTLVP (94 aa)).

The protein belongs to the cytokine receptor-like factor 3 family.

It is found in the cytoplasm. Functionally, may play a role in the negative regulation of cell cycle progression. This is Cytokine receptor-like factor 3 (crlf3) from Xenopus laevis (African clawed frog).